The primary structure comprises 197 residues: ATP-dependent Clp protease proteolytic subunit 2 (197 aa).

Ser-97 acts as the Nucleophile in catalysis. Residue His-122 is part of the active site.

Belongs to the peptidase S14 family. Fourteen ClpP subunits assemble into 2 heptameric rings which stack back to back to give a disk-like structure with a central cavity, resembling the structure of eukaryotic proteasomes.

The protein resides in the cytoplasm. The catalysed reaction is Hydrolysis of proteins to small peptides in the presence of ATP and magnesium. alpha-casein is the usual test substrate. In the absence of ATP, only oligopeptides shorter than five residues are hydrolyzed (such as succinyl-Leu-Tyr-|-NHMec, and Leu-Tyr-Leu-|-Tyr-Trp, in which cleavage of the -Tyr-|-Leu- and -Tyr-|-Trp bonds also occurs).. Cleaves peptides in various proteins in a process that requires ATP hydrolysis. Has a chymotrypsin-like activity. Plays a major role in the degradation of misfolded proteins. In Leptospira interrogans serogroup Icterohaemorrhagiae serovar copenhageni (strain Fiocruz L1-130), this protein is ATP-dependent Clp protease proteolytic subunit 2.